The chain runs to 245 residues: MLIIPAIDLKDGACVRLRQGRMEDSTVFSDDPVSMAAKWVEGGCRRLHLVDLNGAFEGQPVNGEVVTAIAKRYPTLPIQIGGGIRSLETIEHYVKAGVSYVIIGTKAVKDPAFVAEACRAFPGKIIVGLDAKDGFVATDGWAEISTVQVIDLAKQFEADGVSSIVYTDIAKDGMMQGCNVPFTAALAAATKIPVIASGGIHNLGDIKSLLDAKVPGIIGAITGRAIYEGTLDVAEAQAFCDSYQG.

Catalysis depends on Asp-8, which acts as the Proton acceptor. The active-site Proton donor is the Asp-130.

This sequence belongs to the HisA/HisF family.

The protein resides in the cytoplasm. It carries out the reaction 1-(5-phospho-beta-D-ribosyl)-5-[(5-phospho-beta-D-ribosylamino)methylideneamino]imidazole-4-carboxamide = 5-[(5-phospho-1-deoxy-D-ribulos-1-ylimino)methylamino]-1-(5-phospho-beta-D-ribosyl)imidazole-4-carboxamide. It functions in the pathway amino-acid biosynthesis; L-histidine biosynthesis; L-histidine from 5-phospho-alpha-D-ribose 1-diphosphate: step 4/9. In Pseudomonas fluorescens (strain Pf0-1), this protein is 1-(5-phosphoribosyl)-5-[(5-phosphoribosylamino)methylideneamino] imidazole-4-carboxamide isomerase.